A 221-amino-acid polypeptide reads, in one-letter code: Probable serine protease inhibitor 6 (221 aa).

Residues 1–22 (MKCLFLLCLCLFPIVVFSSTFT) form the signal peptide. Positions 23–28 (SQNPIN) are excised as a propeptide. The Vacuolar targeting signal signature appears at 25–30 (NPINLP). 2 disulfides stabilise this stretch: Cys-76-Cys-125 and Cys-174-Cys-191.

Belongs to the protease inhibitor I3 (leguminous Kunitz-type inhibitor) family.

Its subcellular location is the vacuole. Inhibitor of trypsin (serine protease). May protect the plant by inhibiting proteases of invading organisms. In Solanum tuberosum (Potato), this protein is Probable serine protease inhibitor 6.